The sequence spans 356 residues: Peptide chain release factor 1 (356 aa).

Glutamine 233 bears the N5-methylglutamine mark.

The protein belongs to the prokaryotic/mitochondrial release factor family. In terms of processing, methylated by PrmC. Methylation increases the termination efficiency of RF1.

The protein resides in the cytoplasm. Peptide chain release factor 1 directs the termination of translation in response to the peptide chain termination codons UAG and UAA. In Halalkalibacterium halodurans (strain ATCC BAA-125 / DSM 18197 / FERM 7344 / JCM 9153 / C-125) (Bacillus halodurans), this protein is Peptide chain release factor 1.